The chain runs to 372 residues: Gibberellin 20 oxidase 1 (372 aa).

A Fe2OG dioxygenase domain is found at 209–309; that stretch reads RNDSIMRLNY…RRSLAFFLCP (101 aa). 3 residues coordinate Fe cation: histidine 234, aspartate 236, and histidine 290. Residue arginine 300 is part of the active site.

The protein belongs to the iron/ascorbate-dependent oxidoreductase family. GA20OX subfamily. Fe(2+) is required as a cofactor. It depends on L-ascorbate as a cofactor. In terms of tissue distribution, preferentially expressed in reproductive organs. Expressed in the epithelium of embryos and the tapetum of anthers. Expressed at low levels in the shoot apical meristem.

It catalyses the reaction gibberellin A12 + 2 2-oxoglutarate + 3 O2 + H(+) = gibberellin A9 + 2 succinate + 3 CO2 + 2 H2O. The enzyme catalyses gibberellin A53 + 2 2-oxoglutarate + 3 O2 + H(+) = gibberellin A20 + 2 succinate + 3 CO2 + 2 H2O. In terms of biological role, key oxidase enzyme in the biosynthesis of gibberellin. Catalyzes the conversion of GA12 and GA53 to GA9 and GA20 respectively, via a three-step oxidation at C-20 of the GA skeleton. In Oryza sativa subsp. japonica (Rice), this protein is Gibberellin 20 oxidase 1.